Consider the following 206-residue polypeptide: Large ribosomal subunit protein uL4 (206 aa).

A disordered region spans residues 44-78; the sequence is RSGNRAQKDREQVKHTTKKPWRQKGTGRARAGMSS. The span at 58–70 shows a compositional bias: basic residues; it reads HTTKKPWRQKGTG.

This sequence belongs to the universal ribosomal protein uL4 family. As to quaternary structure, part of the 50S ribosomal subunit.

One of the primary rRNA binding proteins, this protein initially binds near the 5'-end of the 23S rRNA. It is important during the early stages of 50S assembly. It makes multiple contacts with different domains of the 23S rRNA in the assembled 50S subunit and ribosome. Its function is as follows. Forms part of the polypeptide exit tunnel. The protein is Large ribosomal subunit protein uL4 of Paraburkholderia phytofirmans (strain DSM 17436 / LMG 22146 / PsJN) (Burkholderia phytofirmans).